The sequence spans 930 residues: Probable SapB synthase (930 aa).

The Protein kinase domain occupies 256 to 516; sequence YTVESALHFS…GSTRADETTR (261 aa). ATP is bound by residues 262–270 and K285; that span reads LHFSNGGGV. D395 functions as the Proton acceptor in the catalytic mechanism. The helical transmembrane segment at 447-467 threads the bilayer; the sequence is YALACLRIVLFLPLTSLLAVD. A compositionally biased stretch (basic and acidic residues) spans 501-527; sequence GSTRVDGSTRADETTRADETTRLDVTT. Disordered regions lie at residues 501-558 and 911-930; these read GSTR…RDSM and PFLP…HQEP. Residues 532–546 are compositionally biased toward low complexity; it reads APDAARRPAGPVAPV. Over residues 547–556 the composition is skewed to basic and acidic residues; the sequence is RPDDWPRSRD.

This sequence in the N-terminal section; belongs to the protein kinase superfamily.

The protein localises to the cell membrane. In terms of biological role, required for aerial hyphae formation. Probably involved in processing the precursor of SapB to its mature form. This Streptomyces coelicolor (strain ATCC BAA-471 / A3(2) / M145) protein is Probable SapB synthase.